A 278-amino-acid chain; its full sequence is Undecaprenyl-diphosphatase 2 (278 aa).

7 consecutive transmembrane segments (helical) span residues 43–63 (GAAF…VYFW), 88–108 (ARLG…GLFF), 119–139 (LYIT…ADRI), 149–169 (LIWR…IPGV), 194–214 (FLLA…KSIG), 226–246 (LATL…LKLV), and 254–274 (FVWY…TGVI).

Belongs to the UppP family.

It is found in the cell inner membrane. It catalyses the reaction di-trans,octa-cis-undecaprenyl diphosphate + H2O = di-trans,octa-cis-undecaprenyl phosphate + phosphate + H(+). In terms of biological role, catalyzes the dephosphorylation of undecaprenyl diphosphate (UPP). Confers resistance to bacitracin. The polypeptide is Undecaprenyl-diphosphatase 2 (Agrobacterium fabrum (strain C58 / ATCC 33970) (Agrobacterium tumefaciens (strain C58))).